We begin with the raw amino-acid sequence, 349 residues long: Nicotinate-nucleotide--dimethylbenzimidazole phosphoribosyltransferase (349 aa).

The active-site Proton acceptor is the Glu-318.

It belongs to the CobT family.

It catalyses the reaction 5,6-dimethylbenzimidazole + nicotinate beta-D-ribonucleotide = alpha-ribazole 5'-phosphate + nicotinate + H(+). The protein operates within nucleoside biosynthesis; alpha-ribazole biosynthesis; alpha-ribazole from 5,6-dimethylbenzimidazole: step 1/2. In terms of biological role, catalyzes the synthesis of alpha-ribazole-5'-phosphate from nicotinate mononucleotide (NAMN) and 5,6-dimethylbenzimidazole (DMB). The chain is Nicotinate-nucleotide--dimethylbenzimidazole phosphoribosyltransferase from Alkaliphilus metalliredigens (strain QYMF).